Here is a 177-residue protein sequence, read N- to C-terminus: B-phycoerythrin beta chain (177 aa).

The (2R,3E)-phycoerythrobilin site is built by cysteine 50 and cysteine 61. Position 72 is an N4-methylasparagine (asparagine 72). 2 residues coordinate (2R,3E)-phycoerythrobilin: cysteine 82 and cysteine 158.

Belongs to the phycobiliprotein family. In terms of assembly, heterotetramer of one alpha-1, one alpha-2, and two beta chains. In terms of processing, contains three covalently linked bilin chromophores.

Its subcellular location is the plastid. It localises to the chloroplast thylakoid membrane. Functionally, light-harvesting photosynthetic bile pigment-protein from the phycobiliprotein complex. This is B-phycoerythrin beta chain (cpeB) from Guillardia theta (Cryptophyte).